We begin with the raw amino-acid sequence, 397 residues long: Argininosuccinate synthase (397 aa).

Alanine 7 to threonine 15 serves as a coordination point for ATP. Residue tyrosine 84 coordinates L-citrulline. Glycine 114 is a binding site for ATP. 3 residues coordinate L-aspartate: threonine 116, asparagine 120, and aspartate 121. Asparagine 120 serves as a coordination point for L-citrulline. Arginine 124, serine 170, serine 179, glutamate 254, and tyrosine 266 together coordinate L-citrulline.

The protein belongs to the argininosuccinate synthase family. Type 1 subfamily. Homotetramer.

The protein localises to the cytoplasm. It carries out the reaction L-citrulline + L-aspartate + ATP = 2-(N(omega)-L-arginino)succinate + AMP + diphosphate + H(+). It participates in amino-acid biosynthesis; L-arginine biosynthesis; L-arginine from L-ornithine and carbamoyl phosphate: step 2/3. This Haloquadratum walsbyi (strain DSM 16790 / HBSQ001) protein is Argininosuccinate synthase.